We begin with the raw amino-acid sequence, 311 residues long: Cadmium, cobalt and zinc/H(+)-K(+) antiporter (311 aa).

Residues 1–12 (MGHNHNEGANKK) are Extracellular-facing. A helical transmembrane segment spans residues 13 to 33 (VLLISFIMITGYMIIEAIGGF). The Cytoplasmic portion of the chain corresponds to 34–43 (LTNSLALLSD). The chain crosses the membrane as a helical span at residues 44-64 (AGHMLSDSISLMVALIAFTLA). Over 65–78 (EKKANHNKTFGYKR) the chain is Extracellular. A helical membrane pass occupies residues 79 to 99 (FEILAAVINGAALILISLYII). Over 100–115 (YEAIERFSNPPKVATT) the chain is Cytoplasmic. A helical transmembrane segment spans residues 116-136 (GMLTISIIGLVVNLLVAWIMM). The Extracellular portion of the chain corresponds to 137-157 (SGGDTKNNLNIRGAYLHVISD). A helical transmembrane segment spans residues 158 to 178 (MLGSVGAILAAILIIFFGWGW). At 179–311 (ADPLASIIVA…MEKQRDHHHH (133 aa)) the chain is on the cytoplasmic side.

It belongs to the cation diffusion facilitator (CDF) transporter (TC 2.A.4) family. SLC30A subfamily.

The protein localises to the cell membrane. Its function is as follows. Involved in divalent cation and potassium homeostasis in the cell. Catalyzes the active efflux of zinc, cadmium and cobalt, in exchange for potassium and H(+) ions. In Bacillus subtilis (strain 168), this protein is Cadmium, cobalt and zinc/H(+)-K(+) antiporter (czcD).